Here is a 556-residue protein sequence, read N- to C-terminus: Glutamine--tRNA ligase (556 aa).

The 'HIGH' region signature appears at 34-44 (PEPNGYLHIGH). Residues 35–37 (EPN) and 41–47 (HIGHAKS) contribute to the ATP site. Aspartate 67 and tyrosine 212 together coordinate L-glutamine. ATP contacts are provided by residues threonine 231, 263 to 264 (RL), and 271 to 273 (MSK). Residues 270-274 (VMSKR) carry the 'KMSKS' region motif.

It belongs to the class-I aminoacyl-tRNA synthetase family. As to quaternary structure, monomer.

It is found in the cytoplasm. It carries out the reaction tRNA(Gln) + L-glutamine + ATP = L-glutaminyl-tRNA(Gln) + AMP + diphosphate. The polypeptide is Glutamine--tRNA ligase (Nitrosomonas europaea (strain ATCC 19718 / CIP 103999 / KCTC 2705 / NBRC 14298)).